An 871-amino-acid polypeptide reads, in one-letter code: Protein pob1 (871 aa).

An SH3 domain is found at alanine 2 to aspartate 65. Residues tryptophan 42 to threonine 168 form a disordered region. Over residues leucine 62–phenylalanine 80 the composition is skewed to basic and acidic residues. 2 stretches are compositionally biased toward low complexity: residues threonine 88 to serine 100 and leucine 109 to asparagine 124. Residues serine 131–threonine 168 show a composition bias toward polar residues. 2 positions are modified to phosphoserine: serine 224 and serine 225. Tyrosine 229 carries the post-translational modification Phosphotyrosine. Phosphoserine is present on serine 241. The region spanning tryptophan 250–serine 313 is the SAM domain. Over residues isoleucine 329–lysine 343 the composition is skewed to low complexity. Disordered stretches follow at residues isoleucine 329–threonine 371 and proline 384–arginine 670. 2 stretches are compositionally biased toward polar residues: residues proline 384–asparagine 395 and threonine 404–leucine 451. Phosphoserine occurs at positions 433, 439, and 440. Position 442 is a phosphothreonine (threonine 442). Serine 444 is subject to Phosphoserine. A compositionally biased stretch (low complexity) spans threonine 456–isoleucine 467. A compositionally biased stretch (polar residues) spans glutamine 492–valine 511. Phosphoserine is present on serine 549. Low complexity predominate over residues serine 549–serine 560. 2 stretches are compositionally biased toward polar residues: residues asparagine 561 to proline 574 and lysine 583 to threonine 606. One can recognise a PH domain in the interval threonine 698–valine 808.

The protein localises to the cytoplasm. Its subcellular location is the membrane. In terms of biological role, has a role in cell elongation and separation. The sequence is that of Protein pob1 (pob1) from Schizosaccharomyces pombe (strain 972 / ATCC 24843) (Fission yeast).